A 400-amino-acid chain; its full sequence is NADH dehydrogenase-like protein Rv1812c (400 aa).

It belongs to the NADH dehydrogenase family. FAD serves as cofactor.

This chain is NADH dehydrogenase-like protein Rv1812c, found in Mycobacterium tuberculosis (strain ATCC 25618 / H37Rv).